A 376-amino-acid chain; its full sequence is Protein insensitive (376 aa).

Residues 50 to 79 (QVEVENRALRDKVRYLEAKLQQHKDLLSQI) adopt a coiled-coil conformation. The BEN domain maps to 258 to 356 (GPNNTCVPAS…TKCADENKMM (99 aa)).

Homodimer. Interacts (via BEN domain) with Su(H). Interacts with Cp190.

Its subcellular location is the nucleus. Its function is as follows. Can act as both a transcriptional repressor and corepressor. Represses the expression of genes involved in neural development and preferentially binds palindromic sequence 5'-CCAATTGG-3' to mediate transcriptional repression. Acts as a corepressor for suppressor of hairless (Su(H)) and inhibits Notch signaling during peripheral nervous system development. This Drosophila melanogaster (Fruit fly) protein is Protein insensitive (insv).